Consider the following 122-residue polypeptide: Large ribosomal subunit protein uL14 (122 aa).

Belongs to the universal ribosomal protein uL14 family. As to quaternary structure, part of the 50S ribosomal subunit. Forms a cluster with proteins L3 and L19. In the 70S ribosome, L14 and L19 interact and together make contacts with the 16S rRNA in bridges B5 and B8.

Functionally, binds to 23S rRNA. Forms part of two intersubunit bridges in the 70S ribosome. The chain is Large ribosomal subunit protein uL14 from Mycobacteroides abscessus (strain ATCC 19977 / DSM 44196 / CCUG 20993 / CIP 104536 / JCM 13569 / NCTC 13031 / TMC 1543 / L948) (Mycobacterium abscessus).